The sequence spans 662 residues: uncharacterized protein (662 aa).

FAD contacts are provided by Ser-145, Glu-164, Trp-173, Asp-184, and Tyr-190. Residues 638–662 form a disordered region; the sequence is SRLETSGVPREGVQRPGSRLRRRPS.

Belongs to the FAD-binding monooxygenase family. It depends on FAD as a cofactor.

This is an uncharacterized protein from Sinorhizobium fredii (strain NBRC 101917 / NGR234).